We begin with the raw amino-acid sequence, 477 residues long: Ribulose bisphosphate carboxylase large chain (477 aa).

A propeptide spanning residues 1-2 (MS) is cleaved from the precursor. Position 3 is an N-acetylproline (proline 3). 2 residues coordinate substrate: asparagine 123 and threonine 173. Residue lysine 175 is the Proton acceptor of the active site. Lysine 177 is a substrate binding site. Mg(2+)-binding residues include lysine 201, aspartate 203, and glutamate 204. Lysine 201 is subject to N6-carboxylysine. The Proton acceptor role is filled by histidine 294. Residues arginine 295, histidine 327, and serine 379 each coordinate substrate.

Belongs to the RuBisCO large chain family. Type I subfamily. Heterohexadecamer of 8 large chains and 8 small chains; disulfide-linked. The disulfide link is formed within the large subunit homodimers. Requires Mg(2+) as cofactor. The disulfide bond which can form between Cys-247 in the large chain dimeric partners within the hexadecamer appears to be associated with oxidative stress and protein turnover.

The protein resides in the plastid. The protein localises to the chloroplast. It carries out the reaction 2 (2R)-3-phosphoglycerate + 2 H(+) = D-ribulose 1,5-bisphosphate + CO2 + H2O. The enzyme catalyses D-ribulose 1,5-bisphosphate + O2 = 2-phosphoglycolate + (2R)-3-phosphoglycerate + 2 H(+). RuBisCO catalyzes two reactions: the carboxylation of D-ribulose 1,5-bisphosphate, the primary event in carbon dioxide fixation, as well as the oxidative fragmentation of the pentose substrate in the photorespiration process. Both reactions occur simultaneously and in competition at the same active site. This is Ribulose bisphosphate carboxylase large chain (rbcL) from Triticum aestivum (Wheat).